Reading from the N-terminus, the 153-residue chain is Selenoprotein F (153 aa).

A signal peptide spans 1 to 19 (MAGEVYLLWLLPLLQGLAS). Position 84 (Sec-84) is a non-standard amino acid, selenocysteine.

Belongs to the selenoprotein M/F family. In terms of tissue distribution, higher levels in polster, prechordal plate, axis, otic vesicle and somites. Lower levels in fin buds.

The protein localises to the endoplasmic reticulum lumen. May be involved in redox reactions associated with the formation of disulfide bonds. May contribute to the quality control of protein folding in the endoplasmic reticulum. The sequence is that of Selenoprotein F from Danio rerio (Zebrafish).